We begin with the raw amino-acid sequence, 199 residues long: Fe/S biogenesis protein NfuA (199 aa).

Cysteine 151 and cysteine 154 together coordinate [4Fe-4S] cluster.

Belongs to the NfuA family. As to quaternary structure, homodimer. [4Fe-4S] cluster serves as cofactor.

Its function is as follows. Involved in iron-sulfur cluster biogenesis. Binds a 4Fe-4S cluster, can transfer this cluster to apoproteins, and thereby intervenes in the maturation of Fe/S proteins. Could also act as a scaffold/chaperone for damaged Fe/S proteins. The sequence is that of Fe/S biogenesis protein NfuA from Xylella fastidiosa (strain 9a5c).